We begin with the raw amino-acid sequence, 183 residues long: Peptidyl-tRNA hydrolase (183 aa).

Y14 contacts tRNA. H19 acts as the Proton acceptor in catalysis. Residues Y60 and N62 each contribute to the tRNA site.

Belongs to the PTH family. In terms of assembly, monomer.

The protein localises to the cytoplasm. The catalysed reaction is an N-acyl-L-alpha-aminoacyl-tRNA + H2O = an N-acyl-L-amino acid + a tRNA + H(+). Functionally, hydrolyzes ribosome-free peptidyl-tRNAs (with 1 or more amino acids incorporated), which drop off the ribosome during protein synthesis, or as a result of ribosome stalling. Catalyzes the release of premature peptidyl moieties from peptidyl-tRNA molecules trapped in stalled 50S ribosomal subunits, and thus maintains levels of free tRNAs and 50S ribosomes. The polypeptide is Peptidyl-tRNA hydrolase (Mycoplasmoides gallisepticum (strain R(low / passage 15 / clone 2)) (Mycoplasma gallisepticum)).